A 306-amino-acid polypeptide reads, in one-letter code: Serine/threonine-protein phosphatase PP2A-1 catalytic subunit (306 aa).

Positions 54, 56, 82, and 114 each coordinate Mn(2+). H115 acts as the Proton donor in catalysis. Mn(2+)-binding residues include H164 and H238. The residue at position 306 (L306) is a Leucine methyl ester.

Belongs to the PPP phosphatase family. PP-2A subfamily. PP2A consists of a common heterodimeric core enzyme, composed of a 36 kDa catalytic subunit (subunit C) and a 65 kDa constant regulatory subunit (subunit A), that associates with a variety of regulatory subunits such as subunits B (the R2/B/PR55/B55, R3/B''/PR72/PR130/PR59 and R5/B'/B56 families). Interacts with TAF12B. Interacts with SRK2E/OST1. Interacts with TAP46. Requires Mn(2+) as cofactor. In terms of processing, reversibly methyl esterified on Leu-306 by leucine carboxyl methyltransferase 1 (LCMT1) and pectin methylesterase 1 (PME1). Carboxyl methylation influences the affinity of the catalytic subunit for the different regulatory subunits, thereby modulating the PP2A holoenzyme's substrate specificity, enzyme activity and cellular localization. Post-translationally, phosphorylation of either threonine (by autophosphorylation-activated protein kinase) or tyrosine results in inactivation of the phosphatase. Auto-dephosphorylation has been suggested as a mechanism for reactivation.

It is found in the cytoplasm. The catalysed reaction is O-phospho-L-seryl-[protein] + H2O = L-seryl-[protein] + phosphate. It carries out the reaction O-phospho-L-threonyl-[protein] + H2O = L-threonyl-[protein] + phosphate. This is Serine/threonine-protein phosphatase PP2A-1 catalytic subunit from Arabidopsis thaliana (Mouse-ear cress).